We begin with the raw amino-acid sequence, 370 residues long: MSNQDTRVVVGMSGGVDSSVTAYLLKEQGYDVIGIFMKNWDDTDENGVCTATEDYNDVIAVCNQIGIPYYAVNFEQEYWDKVFTYFLDEYKKGRTPNPDVMCNKEIKFKAFLDHAMKLGADYVATGHYAQVRRDADGNVEMLRGVDNNKDQTYFLNQLTHEQLSKVMFPLGGMEKSEVRRIAAEQDLATAKKKDSTGICFIGERNFKEFLSNYLPAQSGDMRTLNGKKMGTHSGLMYYTIGQRHGLGIGGDGDPWFVVGKNLEDNVLYVEQGFHHDALYSDYLIASDVSLVNDIDLTDGLECTAKFRYRQKDTKVTVTRIDENQIRVDFDQPVRAITPGQAVVLYDGDVCLGGATIDDVYKEAGQLTYIV.

Residues 11-18 (GMSGGVDS) and Met-37 each bind ATP. The segment at 97–99 (NPD) is interaction with target base in tRNA. The active-site Nucleophile is the Cys-102. A disulfide bridge connects residues Cys-102 and Cys-199. Residue Gly-126 coordinates ATP. The interaction with tRNA stretch occupies residues 149–151 (KDQ). Catalysis depends on Cys-199, which acts as the Cysteine persulfide intermediate. Residues 307–308 (RY) form an interaction with tRNA region.

This sequence belongs to the MnmA/TRMU family.

The protein resides in the cytoplasm. The enzyme catalyses S-sulfanyl-L-cysteinyl-[protein] + uridine(34) in tRNA + AH2 + ATP = 2-thiouridine(34) in tRNA + L-cysteinyl-[protein] + A + AMP + diphosphate + H(+). Its function is as follows. Catalyzes the 2-thiolation of uridine at the wobble position (U34) of tRNA, leading to the formation of s(2)U34. This Staphylococcus carnosus (strain TM300) protein is tRNA-specific 2-thiouridylase MnmA.